The primary structure comprises 428 residues: MTVHVQPCAAPAEDPVSRAVRTESGQREVFCGLTGIVWLHRKIQDAFFLVVGSRTCAHLIQSAAGVMIFAEPRFGTAIMEEKDLAGLTDANDELDRIVTQLLTRRPDIKLLFLVGSCPSEVIKLDLSRAALRLSQRFSPGVRILNYSGSGIETTFTQGEDSCLASLVPALPAAQDETSSLLVIGSLADVVEDQFMRMFDALGIGPVQFFPPRKSTALPSVGPNTKILMAQPFLPDTVRALQERGAKRLAAPFPLGVEGTTGWLRAAADAFGIDAATFDRVTEPNRVRAERALGAYKAELGGRRIFFFPDSQLEIPLARFLARELSMQLVEVGTPYLHREHLAEELKLLPAGVALTEGQDVDLQLDRCRLARPDIAVCGLGLANPLEAEGITTKWSIELVFTPIQGYEQAADLAELFARPLVRRAKLVA.

The [4Fe-4S] cluster site is built by Cys-31, Cys-56, and Cys-117.

Belongs to the BchN/ChlN family. In terms of assembly, protochlorophyllide reductase is composed of three subunits; BchL, BchN and BchB. Forms a heterotetramer of two BchB and two BchN subunits. Requires [4Fe-4S] cluster as cofactor.

It catalyses the reaction chlorophyllide a + oxidized 2[4Fe-4S]-[ferredoxin] + 2 ADP + 2 phosphate = protochlorophyllide a + reduced 2[4Fe-4S]-[ferredoxin] + 2 ATP + 2 H2O. It participates in porphyrin-containing compound metabolism; bacteriochlorophyll biosynthesis (light-independent). Its function is as follows. Component of the dark-operative protochlorophyllide reductase (DPOR) that uses Mg-ATP and reduced ferredoxin to reduce ring D of protochlorophyllide (Pchlide) to form chlorophyllide a (Chlide). This reaction is light-independent. The NB-protein (BchN-BchB) is the catalytic component of the complex. The sequence is that of Light-independent protochlorophyllide reductase subunit N from Rhodopseudomonas palustris (strain HaA2).